Consider the following 474-residue polypeptide: Glutathione synthetase (474 aa).

Position 2 is an N-acetylalanine (A2). R125 contacts substrate. E144 lines the ATP pocket. Mg(2+)-binding residues include E144 and N146. Residues I148–S151, E214–N216, Q220, and R267–Y270 each bind substrate. Residues K305, K364–N373, Y375, and M398–T401 each bind ATP. E368 lines the Mg(2+) pocket. A Phosphoserine modification is found at S415. E425 provides a ligand contact to ATP. R450 lines the substrate pocket. Residues K452 and D458 each coordinate ATP. Substrate is bound at residue V461–A462.

Belongs to the eukaryotic GSH synthase family. As to quaternary structure, homodimer. Mg(2+) is required as a cofactor.

The enzyme catalyses gamma-L-glutamyl-L-cysteine + glycine + ATP = glutathione + ADP + phosphate + H(+). Its pathway is sulfur metabolism; glutathione biosynthesis; glutathione from L-cysteine and L-glutamate: step 2/2. Its function is as follows. Catalyzes the production of glutathione from gamma-glutamylcysteine and glycine in an ATP-dependent manner. Glutathione (gamma-glutamylcysteinylglycine, GSH) is the most abundant intracellular thiol in living aerobic cells and is required for numerous processes including the protection of cells against oxidative damage, amino acid transport, the detoxification of foreign compounds, the maintenance of protein sulfhydryl groups in a reduced state and acts as a cofactor for a number of enzymes. The polypeptide is Glutathione synthetase (GSS) (Macaca fascicularis (Crab-eating macaque)).